A 164-amino-acid polypeptide reads, in one-letter code: Peptidyl-prolyl cis-trans isomerase A (164 aa).

Met-1 carries the post-translational modification N-acetylmethionine. The residue at position 2 (Val-2) is an N-acetylvaline; in Peptidyl-prolyl cis-trans isomerase A, N-terminally processed. The PPIase cyclophilin-type domain occupies 7–163 (FFDIAVDGEP…KKITIADCGQ (157 aa)). Lys-28 carries the post-translational modification N6-acetyllysine; alternate. Lys-28 is covalently cross-linked (Glycyl lysine isopeptide (Lys-Gly) (interchain with G-Cter in SUMO2); alternate). Lys-28 is covalently cross-linked (Glycyl lysine isopeptide (Lys-Gly) (interchain with G-Cter in ubiquitin); alternate). N6-acetyllysine occurs at positions 44 and 76. The cysteines at positions 62 and 161 are disulfide-linked. Phosphoserine is present on Ser-77. Residue Lys-82 is modified to N6-acetyllysine; alternate. Lys-82 is covalently cross-linked (Glycyl lysine isopeptide (Lys-Gly) (interchain with G-Cter in SUMO2); alternate). Thr-93 is modified (phosphothreonine). Asn-108 is a glycosylation site (N-linked (GlcNAc...) asparagine). 3 positions are modified to N6-acetyllysine: Lys-125, Lys-131, and Lys-133.

The protein belongs to the cyclophilin-type PPIase family. PPIase A subfamily. Interacts with protein phosphatase PPP3CA/calcineurin A. Interacts with isoform 2 of BSG/CD147. Interacts with FOXO1; the interaction promotes FOXO1 dephosphorylation, nuclear accumulation and transcriptional activity. Interacts with integrin ITGA2B:ITGB3; the interaction is ROS and peptidyl-prolyl cis-trans isomerase (PPIase) activity-dependent and is increased in the presence of thrombin. Interacts with MAP3K5. Interacts with TARDBP; the interaction is dependent on the RNA-binding activity of TARDBP and the PPIase activity of PPIA/CYPA and the acetylation of PPIA/CYPA at Lys-125 favors the interaction. Interacts with HNRNPA1, HNRNPA2B1, HNRNPC, RBMX, HNRNPK and HNRNPM. Acetylation at Lys-125 markedly inhibits catalysis of cis to trans isomerization. PPIA acetylation also antagonizes the immunosuppressive effects of cyclosporine by inhibiting the sequential steps of cyclosporine binding and calcineurin inhibition. Acetylation at Lys-125 favors the interaction with TARDBP.

The protein localises to the cytoplasm. Its subcellular location is the secreted. It localises to the nucleus. The catalysed reaction is [protein]-peptidylproline (omega=180) = [protein]-peptidylproline (omega=0). Binds cyclosporin A (CsA). CsA mediates some of its effects via an inhibitory action on PPIase. In terms of biological role, catalyzes the cis-trans isomerization of proline imidic peptide bonds in oligopeptides. Exerts a strong chemotactic effect on leukocytes partly through activation of one of its membrane receptors BSG/CD147, initiating a signaling cascade that culminates in MAPK/ERK activation. Activates endothelial cells (ECs) in a proinflammatory manner by stimulating activation of NF-kappa-B and ERK, JNK and p38 MAP-kinases and by inducing expression of adhesion molecules including SELE and VCAM1. Induces apoptosis in ECs by promoting the FOXO1-dependent expression of CCL2 and BCL2L11 which are involved in EC chemotaxis and apoptosis. In response to oxidative stress, initiates proapoptotic and antiapoptotic signaling in ECs via activation of NF-kappa-B and AKT1 and up-regulation of antiapoptotic protein BCL2. Negatively regulates MAP3K5/ASK1 kinase activity, autophosphorylation and oxidative stress-induced apoptosis mediated by MAP3K5/ASK1. Necessary for the assembly of TARDBP in heterogeneous nuclear ribonucleoprotein (hnRNP) complexes and regulates TARDBP binding to RNA UG repeats and TARDBP-dependent expression of HDAC6, ATG7 and VCP which are involved in clearance of protein aggregates. Plays an important role in platelet activation and aggregation. Regulates calcium mobilization and integrin ITGA2B:ITGB3 bidirectional signaling via increased ROS production as well as by facilitating the interaction between integrin and the cell cytoskeleton. Binds heparan sulfate glycosaminoglycans. This chain is Peptidyl-prolyl cis-trans isomerase A (PPIA), found in Bos taurus (Bovine).